The chain runs to 72 residues: Translation initiation factor IF-1 (72 aa).

The S1-like domain occupies 1–72; that stretch reads MAKDDVIEID…DKGRITYRYK (72 aa).

This sequence belongs to the IF-1 family. As to quaternary structure, component of the 30S ribosomal translation pre-initiation complex which assembles on the 30S ribosome in the order IF-2 and IF-3, IF-1 and N-formylmethionyl-tRNA(fMet); mRNA recruitment can occur at any time during PIC assembly.

The protein localises to the cytoplasm. Its function is as follows. One of the essential components for the initiation of protein synthesis. Stabilizes the binding of IF-2 and IF-3 on the 30S subunit to which N-formylmethionyl-tRNA(fMet) subsequently binds. Helps modulate mRNA selection, yielding the 30S pre-initiation complex (PIC). Upon addition of the 50S ribosomal subunit IF-1, IF-2 and IF-3 are released leaving the mature 70S translation initiation complex. The sequence is that of Translation initiation factor IF-1 from Campylobacter fetus subsp. fetus (strain 82-40).